A 492-amino-acid polypeptide reads, in one-letter code: Glutamyl-tRNA(Gln) amidotransferase subunit A (492 aa).

Residues K78 and S158 each act as charge relay system in the active site. The active-site Acyl-ester intermediate is S182.

It belongs to the amidase family. GatA subfamily. Heterotrimer of A, B and C subunits.

The catalysed reaction is L-glutamyl-tRNA(Gln) + L-glutamine + ATP + H2O = L-glutaminyl-tRNA(Gln) + L-glutamate + ADP + phosphate + H(+). Functionally, allows the formation of correctly charged Gln-tRNA(Gln) through the transamidation of misacylated Glu-tRNA(Gln) in organisms which lack glutaminyl-tRNA synthetase. The reaction takes place in the presence of glutamine and ATP through an activated gamma-phospho-Glu-tRNA(Gln). The polypeptide is Glutamyl-tRNA(Gln) amidotransferase subunit A (Rhodopseudomonas palustris (strain HaA2)).